A 598-amino-acid polypeptide reads, in one-letter code: Pescadillo homolog (598 aa).

A disordered region spans residues 296 to 317; sequence QAMKADSKDKDDNSNDEAPENV. Positions 345–439 constitute a BRCT domain; sequence PTATLFEDFV…ELLSANLYLP (95 aa). Disordered stretches follow at residues 452–501, 515–544, and 564–598; these read DALG…EDVE, GIAY…EDEE, and MKYS…VEKK. A compositionally biased stretch (acidic residues) spans 463–485; it reads ESEDESSDSSEESDSEIENEEED. Composition is skewed to basic and acidic residues over residues 520-532, 570-579, and 586-598; these read KAKD…DVAS, QKEDKIEELK, and AKKE…VEKK. Residues 557–598 are a coiled coil; it reads QRKLYKKMKYSNQQKEDKIEELKKKKKQLAKKEKTLKKVEKK.

This sequence belongs to the pescadillo family. As to quaternary structure, component of the NOP7 complex, composed of ERB1, NOP7 and YTM1. The complex is held together by ERB1, which interacts with NOP7 via its N-terminal domain and with YTM1 via a high-affinity interaction between the seven-bladed beta-propeller domains of the 2 proteins. The NOP7 complex associates with the 66S pre-ribosome.

It is found in the nucleus. The protein localises to the nucleolus. Its subcellular location is the nucleoplasm. Its function is as follows. Component of the NOP7 complex, which is required for maturation of the 25S and 5.8S ribosomal RNAs and formation of the 60S ribosome. In Candida glabrata (strain ATCC 2001 / BCRC 20586 / JCM 3761 / NBRC 0622 / NRRL Y-65 / CBS 138) (Yeast), this protein is Pescadillo homolog.